Here is a 297-residue protein sequence, read N- to C-terminus: MRAPSTSANLGSGFDVVAVAHDAYFAEAYVKLTSGCGVDIKFRGFDPGGDNTVRRAFQHLFERLGRCWGVEAEVDNRIPIARGLGSSGASAVAALAAFIREAGLRVDPAAVVEAAGLGEAAAAGSPHFDNVAAAALGGAVVIASVKPLELVKFSPRLTFVVGVPDVPPMPEKTKVMRSVLPREVPFRTYVAQLARVSALVAGFARSDPRLVALGMSDEVVEPARAPHVPAYARVRRYALEAGALAVAISGAGPSMIALVEDRDSGAVRAAVERAYAEEGLRAEVKVASTAEGALKDL.

79-89 contributes to the ATP binding site; it reads PIARGLGSSGA.

The protein belongs to the GHMP kinase family. Homoserine kinase subfamily.

Its subcellular location is the cytoplasm. It carries out the reaction L-homoserine + ATP = O-phospho-L-homoserine + ADP + H(+). It functions in the pathway amino-acid biosynthesis; L-threonine biosynthesis; L-threonine from L-aspartate: step 4/5. Its function is as follows. Catalyzes the ATP-dependent phosphorylation of L-homoserine to L-homoserine phosphate. The protein is Homoserine kinase of Pyrobaculum neutrophilum (strain DSM 2338 / JCM 9278 / NBRC 100436 / V24Sta) (Thermoproteus neutrophilus).